The chain runs to 69 residues: MAKIKGQVKWFNESKGFGFITPADGSKDVFVHFSAIQGNGFKTLAEGQNVEFEIQDGQKGPAAVNVTAI.

Residues 6-66 (GQVKWFNESK…GQKGPAAVNV (61 aa)) form the CSD domain.

The protein resides in the cytoplasm. This is Cold shock-like protein CspC (cspC) from Escherichia coli O157:H7.